The primary structure comprises 253 residues: 5'/3'-nucleotidase SurE (253 aa).

The a divalent metal cation site is built by Asp-8, Asp-9, Ser-39, and Asn-92.

It belongs to the SurE nucleotidase family. A divalent metal cation is required as a cofactor.

It is found in the cytoplasm. It carries out the reaction a ribonucleoside 5'-phosphate + H2O = a ribonucleoside + phosphate. The catalysed reaction is a ribonucleoside 3'-phosphate + H2O = a ribonucleoside + phosphate. The enzyme catalyses [phosphate](n) + H2O = [phosphate](n-1) + phosphate + H(+). Its function is as follows. Nucleotidase with a broad substrate specificity as it can dephosphorylate various ribo- and deoxyribonucleoside 5'-monophosphates and ribonucleoside 3'-monophosphates with highest affinity to 3'-AMP. Also hydrolyzes polyphosphate (exopolyphosphatase activity) with the preference for short-chain-length substrates (P20-25). Might be involved in the regulation of dNTP and NTP pools, and in the turnover of 3'-mononucleotides produced by numerous intracellular RNases (T1, T2, and F) during the degradation of various RNAs. The chain is 5'/3'-nucleotidase SurE from Salmonella paratyphi A (strain AKU_12601).